The primary structure comprises 140 residues: Blasticidin-S deaminase (140 aa).

The 133-residue stretch at 8–140 folds into the CMP/dCMP-type deaminase domain; it reads QQDLELVEVA…ELIPLKYTRN (133 aa). Zn(2+) is bound at residue cysteine 59. The active-site Proton donor is the glutamate 61. Zn(2+) is bound by residues cysteine 100 and cysteine 103.

It belongs to the cytidine and deoxycytidylate deaminase family. It depends on Zn(2+) as a cofactor.

The enzyme catalyses blasticidin S + H2O + H(+) = deaminohydroxyblasticidin S + NH4(+). In terms of biological role, catalyzes the deamination of the cytosine moiety of the antibiotics blasticidin S, cytomycin and acetylblasticidin S. This is Blasticidin-S deaminase (bsr) from Bacillus cereus.